Here is a 531-residue protein sequence, read N- to C-terminus: Tyrosine/DOPA decarboxylase 2 (531 aa).

Residue Lys-319 is modified to N6-(pyridoxal phosphate)lysine.

This sequence belongs to the group II decarboxylase family. As to quaternary structure, homodimer. Pyridoxal 5'-phosphate is required as a cofactor. Predominantly expressed in the roots and stems, while a lower level expression is seen in the sepals and carpels of fully expanded flowers.

It carries out the reaction L-tyrosine + H(+) = tyramine + CO2. The enzyme catalyses L-dopa + H(+) = dopamine + CO2. The catalysed reaction is 5-hydroxy-L-tryptophan + H(+) = serotonin + CO2. Its function is as follows. Marginally higher substrate specificity for L-DOPA over L-tyrosine. In Papaver somniferum (Opium poppy), this protein is Tyrosine/DOPA decarboxylase 2 (TYDC2).